We begin with the raw amino-acid sequence, 175 residues long: Adenine phosphoribosyltransferase (175 aa).

The protein belongs to the purine/pyrimidine phosphoribosyltransferase family. In terms of assembly, homodimer.

The protein resides in the cytoplasm. The enzyme catalyses AMP + diphosphate = 5-phospho-alpha-D-ribose 1-diphosphate + adenine. Its pathway is purine metabolism; AMP biosynthesis via salvage pathway; AMP from adenine: step 1/1. Its function is as follows. Catalyzes a salvage reaction resulting in the formation of AMP, that is energically less costly than de novo synthesis. The sequence is that of Adenine phosphoribosyltransferase from Clavibacter michiganensis subsp. michiganensis (strain NCPPB 382).